The following is a 157-amino-acid chain: Endoribonuclease YbeY (157 aa).

Zn(2+) is bound by residues His-123, His-127, and His-133.

This sequence belongs to the endoribonuclease YbeY family. It depends on Zn(2+) as a cofactor.

The protein localises to the cytoplasm. Functionally, single strand-specific metallo-endoribonuclease involved in late-stage 70S ribosome quality control and in maturation of the 3' terminus of the 16S rRNA. The sequence is that of Endoribonuclease YbeY from Limosilactobacillus fermentum (strain NBRC 3956 / LMG 18251) (Lactobacillus fermentum).